We begin with the raw amino-acid sequence, 144 residues long: MRNTGAGPSPSVSRPPPSAAPLSGAALAAPGDAPSALYAPSALVLTVGKGVSATTAAPERAVTLTCAPGPSGTHPAAGSACADLAAVGGDLNALTRGEDVMCPMVYDPVLLTVDGVWQGKRVSYERVFSNECEMNAHGSSVFAF.

The span at 1–12 (MRNTGAGPSPSV) shows a compositional bias: low complexity. The disordered stretch occupies residues 1–25 (MRNTGAGPSPSVSRPPPSAAPLSGA). Positions 1–31 (MRNTGAGPSPSVSRPPPSAAPLSGAALAAPG) are cleaved as a signal peptide. Repeats lie at residues 33–37 (APSAL) and 39–43 (APSAL). Intrachain disulfides connect Cys-66–Cys-81 and Cys-102–Cys-132.

It belongs to the protease inhibitor I16 (SSI) family. Homodimer.

Its subcellular location is the secreted. Strong inhibitor of bacterial serine proteases such as subtilisin. This is Subtilisin inhibitor (ssi) from Streptomyces albogriseolus.